Here is a 363-residue protein sequence, read N- to C-terminus: Elongation factor Tu, chloroplastic (363 aa).

The tr-type G domain maps to 1–189; that stretch reads TLTAAITMAL…NVDEYIPTPE (189 aa). Residues 55 to 59 and 110 to 113 each bind GTP; these read DCPGH and NKED.

This sequence belongs to the TRAFAC class translation factor GTPase superfamily. Classic translation factor GTPase family. EF-Tu/EF-1A subfamily.

The protein resides in the plastid. The protein localises to the chloroplast. The catalysed reaction is GTP + H2O = GDP + phosphate + H(+). GTP hydrolase that promotes the GTP-dependent binding of aminoacyl-tRNA to the A-site of ribosomes during protein biosynthesis. This Gymnochlora stellata protein is Elongation factor Tu, chloroplastic (tufA).